The sequence spans 421 residues: Enolase (421 aa).

Glutamine 162 contacts (2R)-2-phosphoglycerate. Glutamate 204 acts as the Proton donor in catalysis. Aspartate 241, glutamate 284, and aspartate 311 together coordinate Mg(2+). Lysine 336, arginine 365, serine 366, and lysine 387 together coordinate (2R)-2-phosphoglycerate. Lysine 336 (proton acceptor) is an active-site residue.

The protein belongs to the enolase family. The cofactor is Mg(2+).

Its subcellular location is the cytoplasm. It is found in the secreted. The protein localises to the cell surface. It carries out the reaction (2R)-2-phosphoglycerate = phosphoenolpyruvate + H2O. The protein operates within carbohydrate degradation; glycolysis; pyruvate from D-glyceraldehyde 3-phosphate: step 4/5. Functionally, catalyzes the reversible conversion of 2-phosphoglycerate (2-PG) into phosphoenolpyruvate (PEP). It is essential for the degradation of carbohydrates via glycolysis. In Nitratiruptor sp. (strain SB155-2), this protein is Enolase.